The chain runs to 432 residues: D-amino acid dehydrogenase (432 aa).

3 to 17 (VVILGSGVVGVASAW) serves as a coordination point for FAD.

Belongs to the DadA oxidoreductase family. Requires FAD as cofactor.

The catalysed reaction is a D-alpha-amino acid + A + H2O = a 2-oxocarboxylate + AH2 + NH4(+). It participates in amino-acid degradation; D-alanine degradation; NH(3) and pyruvate from D-alanine: step 1/1. In terms of biological role, oxidative deamination of D-amino acids. This Shigella sonnei (strain Ss046) protein is D-amino acid dehydrogenase.